Consider the following 253-residue polypeptide: 1-(5-phosphoribosyl)-5-[(5-phosphoribosylamino)methylideneamino] imidazole-4-carboxamide isomerase (253 aa).

Residue Asp-8 is the Proton acceptor of the active site. The active-site Proton donor is Asp-131.

This sequence belongs to the HisA/HisF family.

It is found in the cytoplasm. It catalyses the reaction 1-(5-phospho-beta-D-ribosyl)-5-[(5-phospho-beta-D-ribosylamino)methylideneamino]imidazole-4-carboxamide = 5-[(5-phospho-1-deoxy-D-ribulos-1-ylimino)methylamino]-1-(5-phospho-beta-D-ribosyl)imidazole-4-carboxamide. The protein operates within amino-acid biosynthesis; L-histidine biosynthesis; L-histidine from 5-phospho-alpha-D-ribose 1-diphosphate: step 4/9. This chain is 1-(5-phosphoribosyl)-5-[(5-phosphoribosylamino)methylideneamino] imidazole-4-carboxamide isomerase, found in Polynucleobacter necessarius subsp. necessarius (strain STIR1).